Here is a 947-residue protein sequence, read N- to C-terminus: Serine-aspartate repeat-containing protein C (947 aa).

The first 50 residues, 1-50 (MNNKKTATNRKGMIPNRLNKFSIRKYSVGTASILVGTTLIFGLSGHEAKA), serve as a signal peptide directing secretion. The short motif at 21–32 (FSIRKYSVGTAS) is the YSIRK-G/S signaling motif element. Residues 51-164 (AEHTNGELNQ…STTPKTTTIK (114 aa)) are disordered. The tract at residues 51–495 (AEHTNGELNQ…GSSTANGDQK (445 aa)) is ligand binding A region. The segment covering 56–71 (GELNQSKNETTAPSEN) has biased composition (polar residues). The span at 72-83 (KTTKKVDSRQLK) shows a compositional bias: basic and acidic residues. The segment covering 84–155 (DNTQTATADQ…SNLTQAKDVS (72 aa)) has biased composition (polar residues). CNA-B domains lie at 496-606 (KYNL…YKTP) and 607-717 (KYSL…EEET). The tract at residues 678-927 (TQTGTNTTED…NNSNNGTLFG (250 aa)) is disordered. Composition is skewed to acidic residues over residues 685-695 (TEDDKDADGGE) and 712-886 (YYEE…DSDS). The LPXTG sorting signal motif lies at 910-914 (LPETG). Residues 912-927 (ETGSENNNSNNGTLFG) are compositionally biased toward low complexity. The residue at position 913 (threonine 913) is a Pentaglycyl murein peptidoglycan amidated threonine. Positions 914 to 947 (GSENNNSNNGTLFGGLFAALGSLLLFGRRKKQNK) are cleaved as a propeptide — removed by sortase.

Belongs to the serine-aspartate repeat-containing protein (SDr) family. As to quaternary structure, homodimerizes; via N2-Domain. Interacts with host NRXN1; this interaction mediates bacterial attachment to host cells.

It localises to the secreted. The protein resides in the cell wall. In terms of biological role, cell surface-associated calcium-binding protein which plays an important role in adhesion and pathogenesis. Mediates interactions with components of the extracellular matrix such as host NRXN1 to promote bacterial adhesion. This chain is Serine-aspartate repeat-containing protein C (sdrC), found in Staphylococcus aureus (strain Newman).